The primary structure comprises 133 residues: Antifungal protein ginkbilobin-like protein 2 (133 aa).

An N-terminal signal peptide occupies residues 1–24 (MSMGSFGFALAVMVLAVLVASAAG). Residues 28-133 (TNLVSSACNG…CFIRYEQYSI (106 aa)) enclose the Gnk2-homologous domain. Asn36 is a binding site for alpha-D-mannopyranose. Disulfide bonds link Cys87–Cys96 and Cys99–Cys124. Residues Arg118 and Glu129 each coordinate alpha-D-mannopyranose.

Exerts antifungal activity through its carbohydrate-binding specificity. The sequence is that of Antifungal protein ginkbilobin-like protein 2 from Picea glauca (White spruce).